A 610-amino-acid polypeptide reads, in one-letter code: Autophagy-related protein 22-1 (610 aa).

The segment at 1 to 29 is disordered; the sequence is MIFTSTPPAPPPADAQQRQPRYPGEDTTP. A helical transmembrane segment spans residues 41 to 61; it reads YGIAAEVFAVCGVGSFLPLTL. The N-linked (GlcNAc...) asparagine glycan is linked to N90. Transmembrane regions (helical) follow at residues 120–140, 153–173, and 177–197; these read SFAM…LISF, LLLT…FISP, and ILGA…FVVL. The interval 216–242 is disordered; the sequence is KTEGEELPHLDSSGEYTRSGSFNRGDN. The segment covering 229-239 has biased composition (polar residues); sequence GEYTRSGSFNR. 4 helical membrane passes run 277 to 297, 310 to 330, 379 to 399, and 415 to 435; these read GVGL…LLLF, TLPL…FTVV, VVIF…VSGT, and VGLL…LWPV. Residue N445 is glycosylated (N-linked (GlcNAc...) asparagine). Helical transmembrane passes span 450 to 470, 485 to 507, 527 to 547, and 550 to 570; these read LCIA…IPLV, FPLG…SFFG, KGSS…TGQV, and GFFF…MVNA. A disordered region spans residues 586 to 610; that stretch reads KSHGENSSEFGHPSEEAEGLLARNP. N591 carries N-linked (GlcNAc...) asparagine glycosylation.

It belongs to the ATG22 family.

It is found in the vacuole membrane. Its function is as follows. Vacuolar effluxer which mediate the efflux of amino acids resulting from autophagic degradation. The release of autophagic amino acids allows the maintenance of protein synthesis and viability during nitrogen starvation. This is Autophagy-related protein 22-1 (atg22-1) from Aspergillus clavatus (strain ATCC 1007 / CBS 513.65 / DSM 816 / NCTC 3887 / NRRL 1 / QM 1276 / 107).